The chain runs to 408 residues: MKFFDEARIEVVAGDGGNGAATFRREKFIPRGGPDGGDGGRGGSVYAVADRNLNTLVEYRFKRSFRAERGENGGSKDCYGKGGEDITLHFPVGTVISDLDSGEPIADLDVDGKRVLLAQGGRGGLGNLHFKSSVNRAPRKRTMGQEGERRNLHLELKVLADVGLLGMPNAGKSTFIRAVSAARPKVGDYPFTTLQPNLGVVRTDENRSFVIADIPGLIEGAAEGAGLGHQFLRHLQRTHVLLHLVDLAPFDPEVDPVRDALAIVEELRKYDESLYNKPRWLVLNKLDLLEPEDRAPRVAAFLEAYGEVERHFEISALQGEGCRGLIFALQDFLDSERANIHAQQAAREAEERQRLAAAQSARSAAEAEALEADLAEDALAEDALAEDALAEDALDDDADGEDADPNAR.

In terms of domain architecture, Obg spans 1 to 159; it reads MKFFDEARIE…RNLHLELKVL (159 aa). The OBG-type G domain occupies 160 to 334; it reads ADVGLLGMPN…LIFALQDFLD (175 aa). Residues 166 to 173, 191 to 195, 213 to 216, 284 to 287, and 315 to 317 contribute to the GTP site; these read GMPNAGKS, FTTLQ, DIPG, NKLD, and SAL. Mg(2+) is bound by residues Ser173 and Thr193. The segment at 385–408 is disordered; the sequence is AEDALAEDALDDDADGEDADPNAR.

Belongs to the TRAFAC class OBG-HflX-like GTPase superfamily. OBG GTPase family. In terms of assembly, monomer. Mg(2+) serves as cofactor.

Its subcellular location is the cytoplasm. Functionally, an essential GTPase which binds GTP, GDP and possibly (p)ppGpp with moderate affinity, with high nucleotide exchange rates and a fairly low GTP hydrolysis rate. Plays a role in control of the cell cycle, stress response, ribosome biogenesis and in those bacteria that undergo differentiation, in morphogenesis control. This chain is GTPase Obg, found in Azoarcus sp. (strain BH72).